The primary structure comprises 2101 residues: General transcription factor 3C polypeptide 1 (2101 aa).

A compositionally biased stretch (acidic residues) spans 473–487 (GEEAFLSDSESEEES). Disordered stretches follow at residues 473–574 (GEEA…MDSH) and 588–609 (NPKE…DKPH). Residues 492–503 (GKRRGRGSRGHA) show a composition bias toward basic residues. A compositionally biased stretch (low complexity) spans 504 to 513 (RASGDAGSGS). Lys-534 participates in a covalent cross-link: Glycyl lysine isopeptide (Lys-Gly) (interchain with G-Cter in SUMO2). Ser-667 is modified (phosphoserine). 2 disordered regions span residues 718–772 (STAN…EKMG) and 820–864 (GEQP…SSWE). A compositionally biased stretch (polar residues) spans 747 to 759 (RSANSDPNTSSKP). 2 stretches are compositionally biased toward basic and acidic residues: residues 760 to 771 (ESTRVKKTDEKM) and 826 to 836 (HSERKTGKQES). Residues Lys-770 and Lys-833 each participate in a glycyl lysine isopeptide (Lys-Gly) (interchain with G-Cter in SUMO2) cross-link. Position 1063 is a phosphoserine (Ser-1063). Over residues 1186–1196 (EEQFELDREPT) the composition is skewed to basic and acidic residues. Disordered stretches follow at residues 1186 to 1239 (EEQF…KKLR), 1598 to 1627 (KSLG…QGVE), and 1822 to 1923 (DTKA…QENQ). Thr-1196 carries the phosphothreonine modification. Positions 1199 to 1215 (RNRKVRGGKSQKRKRLK) are enriched in basic residues. A compositionally biased stretch (basic and acidic residues) spans 1229-1239 (EHPEAKSKKLR). Positions 1606 to 1617 (LDDDEEEEDLDE) are enriched in acidic residues. Residues 1822–1831 (DTKASGDDSQ) are compositionally biased toward basic and acidic residues. Residues Ser-1854 and Ser-1890 each carry the phosphoserine modification. The span at 1900–1910 (EAQAPAQLAAP) shows a compositional bias: low complexity.

This sequence belongs to the TFIIIC subunit 1 family. Part of the TFIIIC subcomplex TFIIIC2, consisting of six subunits, GTF3C1, GTF3C2, GTF3C3, GTF3C4, GTF3C5 and GTF3C6. Interacts with IGHMBP2. Interacts with MAF1.

The protein resides in the nucleus. In terms of biological role, required for RNA polymerase III-mediated transcription. Component of TFIIIC that initiates transcription complex assembly on tRNA and is required for transcription of 5S rRNA and other stable nuclear and cytoplasmic RNAs. Binds to the box B promoter element. This chain is General transcription factor 3C polypeptide 1 (Gtf3c1), found in Mus musculus (Mouse).